The chain runs to 264 residues: Homeobox protein vent1 (264 aa).

Composition is skewed to basic and acidic residues over residues 16–26 (KEEATDGKDSM) and 44–59 (YAKE…DVQE). The segment at 16–140 (KEEATDGKDS…RLRTAFTPQQ (125 aa)) is disordered. The span at 60–80 (HTTSFQCSLGEQVINRPSANP) shows a compositional bias: polar residues. Over residues 117 to 130 (TEQREKSPKSDLQR) the composition is skewed to basic and acidic residues. The homeobox DNA-binding region spans 129-188 (QRRLRTAFTPQQISKLEQAFNKQRYLGAPERKKLATSLQLSEIQVKTWFQNRRMKLKRQI).

In terms of tissue distribution, expressed in the ventral marginal zone of gastrulae. At stage 11.5, also expressed in the ventral region of the animal cap (ectoderm). At the end of gastrulation, predominantly localized to the ventral and lateral regions of the closing slit blastopore. At early tail bud stage, expression is maintained only in the forming proctodeum.

It localises to the nucleus. In terms of biological role, transcriptional repressor. Cooperates with vent2 in a ventral signaling pathway downstream of bmp4, which antagonizes the Spemann organizer and dorsal mesoderm formation, and leads to ventral mesoderm formation. Acts downstream of bmp4 to repress transcription of foxa4-B/XFD-1'. Binds to DNA with preference for the target sequence 5'-CTATT[T/C]G-3'. Also binds 5'-TGCATTTTG-3' at a lower frequency, and occasionally 5'-TTGATC-3'. Binds to the homeobox 2 (HBX2) repressor element in the promoter of the myf5 gene and represses myf5 transcription in the ventral domain. This chain is Homeobox protein vent1 (vent1), found in Xenopus laevis (African clawed frog).